We begin with the raw amino-acid sequence, 452 residues long: Protein CSN12 homolog (452 aa).

The PCI domain occupies 249–446 (VTFKYYEGVL…GFVVLSKSGA (198 aa)).

It belongs to the CSN12 family.

In Neurospora crassa (strain ATCC 24698 / 74-OR23-1A / CBS 708.71 / DSM 1257 / FGSC 987), this protein is Protein CSN12 homolog (csn-8).